A 48-amino-acid polypeptide reads, in one-letter code: uncharacterized protein (48 aa).

This is an uncharacterized protein from Dictyostelium discoideum (Social amoeba).